We begin with the raw amino-acid sequence, 168 residues long: Cofilin-1-A (168 aa).

The residue at position 2 (Ala-2) is an N-acetylalanine. The 150-residue stretch at 4-153 folds into the ADF-H domain; it reads GVMVSDDVIK…NDPCNLADKL (150 aa). The short motif at 30-34 is the Nuclear localization signal element; sequence KKRKK.

The protein belongs to the actin-binding proteins ADF family. Inactive when phosphorylated. Phosphorylation levels vary during development. Oocytes contain only the phosphorylated form, and 80-95% of cfl1 protein is phosphorylated in unfertilized eggs. Rapid dephosphorylation occurs within 30 minutes after fertilization. Phosphorylation levels increase again between the morula and blastula stages (5-8 hpf) and then decrease again as gastrulation approaches. Dephosphorylated by pdxp. Expressed diffusely in both animal and vegetal hemispheres of the oocyte. During cleavage, expression accumulates around the cleavage furrow, along the vegetal membrane, and later in the midbody. Strongly expressed in the animal hemisphere during blastula stages, with most cells showing expression by gastrulation. By stage 17, expression is highest in cells of the developing neuroectoderm, and at stage 24 the notochord, neural tube, neural crest, somites and some cells of the archenteron show high expression. By stage 35, expression has declined in the notochord, but remains in the neural tube, epidermis and a layer of cells in the archenteron. Also highly expressed in the retina and neuronal cell bodies at the base of the cement gland but not the cement gland itself. At stage 38, expression is widespread, being highest in the nervous system and retina. In the adult, expression is high in the brain, heart, oocyte, stomach, and low in skeletal muscle.

It localises to the nucleus matrix. Its subcellular location is the cytoplasm. The protein localises to the cytoskeleton. The protein resides in the cell cortex. It is found in the membrane. May play a role in the regulation of cell morphology and cytoskeletal organization. Binds to F-actin and exhibits pH-sensitive F-actin depolymerizing activity. Required for formation of the cleavage furrow during cytokinesis. The sequence is that of Cofilin-1-A (cfl1-a) from Xenopus laevis (African clawed frog).